Consider the following 175-residue polypeptide: Gamma-crystallin B (175 aa).

Beta/gamma crystallin 'Greek key' domains lie at 2 to 40 (GKIT…RVDS) and 41 to 83 (GCWM…RLIP). Lys3 carries an N-linked (Glc) (glycation) lysine; in vitro glycan. An intrachain disulfide couples Cys19 to Cys23. The interval 84–88 (QHTGT) is connecting peptide. Beta/gamma crystallin 'Greek key' domains follow at residues 89–129 (FRMR…NVLE) and 130–172 (GSWV…RRVM).

Belongs to the beta/gamma-crystallin family.

In terms of biological role, crystallins are the dominant structural components of the vertebrate eye lens. The polypeptide is Gamma-crystallin B (CRYGB) (Bos taurus (Bovine)).